Reading from the N-terminus, the 119-residue chain is Outer membrane protein assembly factor BamE (119 aa).

A signal peptide spans methionine 1 to glycine 19. Residue cysteine 20 is the site of N-palmitoyl cysteine attachment. The S-diacylglycerol cysteine moiety is linked to residue cysteine 20.

The protein belongs to the BamE family. In terms of assembly, part of the Bam complex.

Its subcellular location is the cell outer membrane. Part of the outer membrane protein assembly complex, which is involved in assembly and insertion of beta-barrel proteins into the outer membrane. The sequence is that of Outer membrane protein assembly factor BamE from Vibrio cholerae serotype O1 (strain ATCC 39541 / Classical Ogawa 395 / O395).